A 240-amino-acid chain; its full sequence is Adenylate dimethylallyltransferase (240 aa).

The protein belongs to the isopentenyl transferase family.

The enzyme catalyses dimethylallyl diphosphate + AMP = N(6)-(dimethylallyl)adenosine 5'-phosphate + diphosphate. Its function is as follows. Transfers dimethylallyl groups to AMP as part of the biosynthesis of cytokinin phytohormones. The chain is Adenylate dimethylallyltransferase (ipt) from Agrobacterium vitis (Rhizobium vitis).